Consider the following 124-residue polypeptide: Large ribosomal subunit protein bL20c (124 aa).

This sequence belongs to the bacterial ribosomal protein bL20 family.

The protein resides in the plastid. It localises to the chloroplast. Functionally, binds directly to 23S ribosomal RNA and is necessary for the in vitro assembly process of the 50S ribosomal subunit. It is not involved in the protein synthesizing functions of that subunit. This chain is Large ribosomal subunit protein bL20c (rpl20), found in Euglena gracilis.